The following is a 188-amino-acid chain: Large ribosomal subunit protein eL18A (188 aa).

The segment at 153–188 (GKAPSTPHSRTKPYVLSKGRKFERARGRRASRGYKN) is disordered. Over residues 178–188 (RGRRASRGYKN) the composition is skewed to basic residues.

It belongs to the eukaryotic ribosomal protein eL18 family. Component of the large ribosomal subunit.

It is found in the cytoplasm. In terms of biological role, component of the large ribosomal subunit. The ribosome is a large ribonucleoprotein complex responsible for the synthesis of proteins in the cell. The chain is Large ribosomal subunit protein eL18A (rpl18-a) from Xenopus laevis (African clawed frog).